Here is a 683-residue protein sequence, read N- to C-terminus: Protein hook (683 aa).

The Calponin-homology (CH) domain occupies 5–123 (NGMYYSLLEW…RLLQLVLGCA (119 aa)). Coiled coils occupy residues 135-440 (EIMC…LKCG) and 484-594 (QTAL…AKEV).

This sequence belongs to the hook family. As to quaternary structure, homodimer. Interacts with microtubules via its N-terminus.

Its subcellular location is the cytoplasm. The protein resides in the cytoskeleton. It localises to the endosome. The protein localises to the synapse. Involved in endocytic trafficking by stabilizing organelles of the endocytic pathway. Probably acts as a cytoskeletal linker protein required to tether endosome vesicles to the cytoskeleton. Involved in modulation of endocytosis at stages required for down-regulation of membrane proteins that control synapse size. Not involved in synaptic vesicle recycling. Required in R7 cells for boss endocytosis into multivesicular bodies (MVBs). Has a role in regulating adult longevity. This chain is Protein hook, found in Drosophila grimshawi (Hawaiian fruit fly).